Consider the following 314-residue polypeptide: O-antigen chain rhamnosyltransferase RfbN (314 aa).

The protein belongs to the glycosyltransferase 2 family.

It carries out the reaction alpha-D-galactosyl-di-trans,octa-cis-undecaprenyl diphosphate + dTDP-beta-L-rhamnose = alpha-L-rhamnosyl-(1-&gt;3)-alpha-D-galactosyl-1-diphospho-di-trans,octa-cis-undecaprenol + dTDP + H(+). Its pathway is bacterial outer membrane biogenesis; LPS O-antigen biosynthesis. Functionally, rhamnosyltransferase involved in the biosynthesis of the repeat unit of the lipopolysaccharide (LPS) O-antigen region. Catalyzes the addition of a rhamnose to the galactosyl-undecaprenyl diphosphate intermediate. This is O-antigen chain rhamnosyltransferase RfbN from Salmonella typhimurium (strain LT2 / SGSC1412 / ATCC 700720).